Consider the following 82-residue polypeptide: uncharacterized protein (82 aa).

2 consecutive transmembrane segments (helical) span residues 32–52 (PFSI…IGIL) and 59–79 (SKPL…FNII).

Its subcellular location is the cell membrane. This is an uncharacterized protein from Rickettsia prowazekii (strain Madrid E).